Consider the following 384-residue polypeptide: Zinc transporter 7 (384 aa).

An N-terminal signal peptide occupies residues 1-25; it reads MERFVQFLRRGNGLMAASLAAGSCA. Topologically, residues 26–46 are extracellular; that stretch reads EEVAKAEGAGCRDDAAALRLK. A helical transmembrane segment spans residues 47-67; sequence GVAMATILVAGVVGVGLPLAG. Over 68 to 79 the chain is Cytoplasmic; the sequence is RKRRALRTDSAA. Residues 80-100 traverse the membrane as a helical segment; sequence FVAAKAFAAGVILATGFVHML. At 101–119 the chain is on the extracellular side; the sequence is HDAEHALSSPCLPAHPWRS. The helical transmembrane segment at 120 to 140 threads the bilayer; sequence FPFPGFVAMSAALATLVLDFL. Residues 141–227 are Cytoplasmic-facing; it reads ATRFYEGKHR…GEGEVPAQVR (87 aa). The tract at residues 185 to 222 is disordered; that stretch reads DNKAPLLQPHSHSHSHPHGHGHGHELAQPEGSGGEGEV. The span at 195–205 shows a compositional bias: basic residues; it reads SHSHSHPHGHG. A helical transmembrane segment spans residues 228–248; that stretch reads SVVVSQILEMGIVSHSVIIGL. Residues 249–261 lie on the Extracellular side of the membrane; that stretch reads SLGVSRSPCTIRP. A helical transmembrane segment spans residues 262–282; that stretch reads LVAALSFHQFFEGFALGGCIA. The Cytoplasmic segment spans residues 283–291; that stretch reads QAQFKTLSA. The helical transmembrane segment at 292–312 threads the bilayer; it reads AIMACFFAITTPAGIAAGAGV. Topologically, residues 313-323 are extracellular; it reads ASFYNANSPRA. Residues 324–344 traverse the membrane as a helical segment; the sequence is LVVEGILDSVSAGILIYMSLV. At 345–363 the chain is on the cytoplasmic side; sequence DLIAADFLGGKMTGSTRQQ. The chain crosses the membrane as a helical span at residues 364-384; the sequence is VMAYIALFLGALSMSSLAIWA.

It belongs to the ZIP transporter (TC 2.A.5) family.

It localises to the cell membrane. In terms of biological role, zinc transporter that may be involved in zinc uptake from the rhizosphere. This Oryza sativa subsp. japonica (Rice) protein is Zinc transporter 7 (ZIP7).